The chain runs to 247 residues: Adenosylcobinamide-GDP ribazoletransferase (247 aa).

Helical transmembrane passes span Val-31–Leu-51, Pro-57–Leu-77, Phe-109–Leu-129, Pro-136–Leu-156, Ile-189–Leu-209, and Ile-218–Leu-238.

It belongs to the CobS family. Requires Mg(2+) as cofactor.

Its subcellular location is the cell inner membrane. It carries out the reaction alpha-ribazole + adenosylcob(III)inamide-GDP = adenosylcob(III)alamin + GMP + H(+). It catalyses the reaction alpha-ribazole 5'-phosphate + adenosylcob(III)inamide-GDP = adenosylcob(III)alamin 5'-phosphate + GMP + H(+). It functions in the pathway cofactor biosynthesis; adenosylcobalamin biosynthesis; adenosylcobalamin from cob(II)yrinate a,c-diamide: step 7/7. Joins adenosylcobinamide-GDP and alpha-ribazole to generate adenosylcobalamin (Ado-cobalamin). Also synthesizes adenosylcobalamin 5'-phosphate from adenosylcobinamide-GDP and alpha-ribazole 5'-phosphate. In Thiobacillus denitrificans (strain ATCC 25259 / T1), this protein is Adenosylcobinamide-GDP ribazoletransferase.